The primary structure comprises 659 residues: Enzymatic polyprotein (659 aa).

The tract at residues 1-180 is protease; sequence MSLRNRTNPN…FLEEGGNHVD (180 aa). Asp-34 is a catalytic residue. One can recognise a Reverse transcriptase domain in the interval 252 to 436; that stretch reads LELKVIKPSK…EKINFLGLEI (185 aa).

The protein belongs to the caulimoviridae enzymatic polyprotein family.

The enzyme catalyses DNA(n) + a 2'-deoxyribonucleoside 5'-triphosphate = DNA(n+1) + diphosphate. Functionally, encodes for at least two polypeptides: protease (PR) and reverse transcriptase (RT). The protease processes the polyprotein in cis. Reverse transcriptase is multifunctional enzyme that converts the viral RNA genome into dsDNA in viral cytoplasmic capsids. This enzyme displays a DNA polymerase activity that can copy either DNA or RNA templates, and a ribonuclease H (RNase H) activity that cleaves the RNA strand of RNA-DNA heteroduplexes in a partially processive 3'- to 5'-endonucleasic mode. Neo-synthesized pregenomic RNA (pgRNA) are encapsidated, and reverse-transcribed inside the nucleocapsid. Partial (+)DNA is synthesized from the (-)DNA template and generates the relaxed circular DNA (RC-DNA) genome. After budding and infection, the RC-DNA migrates in the nucleus, and is converted into a plasmid-like covalently closed circular DNA (cccDNA). This is Enzymatic polyprotein from Dianthus caryophyllus (Carnation).